Reading from the N-terminus, the 65-residue chain is Large ribosomal subunit protein bL35 (65 aa).

The disordered stretch occupies residues Met1–Gln26.

Belongs to the bacterial ribosomal protein bL35 family.

This chain is Large ribosomal subunit protein bL35, found in Oenococcus oeni (strain ATCC BAA-331 / PSU-1).